Consider the following 56-residue polypeptide: UPF0391 membrane protein Bd1438 (56 aa).

Helical transmembrane passes span 4–24 and 33–53; these read AAIA…SGVA and ILLF…LVSG.

The protein belongs to the UPF0391 family.

The protein localises to the cell membrane. This Bdellovibrio bacteriovorus (strain ATCC 15356 / DSM 50701 / NCIMB 9529 / HD100) protein is UPF0391 membrane protein Bd1438.